A 293-amino-acid polypeptide reads, in one-letter code: Small ribosomal subunit biogenesis GTPase RsgA (293 aa).

The CP-type G domain maps to 63-223 (KNQLNRPPIA…VADTPGFSSL (161 aa)). GTP contacts are provided by residues 112–115 (SKTD) and 166–174 (GQSGVGKSS). The Zn(2+) site is built by C247, C252, H254, and C260.

This sequence belongs to the TRAFAC class YlqF/YawG GTPase family. RsgA subfamily. In terms of assembly, monomer. Associates with 30S ribosomal subunit, binds 16S rRNA. It depends on Zn(2+) as a cofactor.

It localises to the cytoplasm. Functionally, one of several proteins that assist in the late maturation steps of the functional core of the 30S ribosomal subunit. Helps release RbfA from mature subunits. May play a role in the assembly of ribosomal proteins into the subunit. Circularly permuted GTPase that catalyzes slow GTP hydrolysis, GTPase activity is stimulated by the 30S ribosomal subunit. In Shouchella clausii (strain KSM-K16) (Alkalihalobacillus clausii), this protein is Small ribosomal subunit biogenesis GTPase RsgA.